The following is a 504-amino-acid chain: Phosphoenolpyruvate carboxylase (504 aa).

The segment covering 1–16 has biased composition (polar residues); that stretch reads MTSRKIPSIMGTQHPD. Positions 1–21 are disordered; it reads MTSRKIPSIMGTQHPDNANAP.

It belongs to the PEPCase type 2 family. Homotetramer. The cofactor is Mg(2+).

The enzyme catalyses oxaloacetate + phosphate = phosphoenolpyruvate + hydrogencarbonate. Functionally, catalyzes the irreversible beta-carboxylation of phosphoenolpyruvate (PEP) to form oxaloacetate (OAA), a four-carbon dicarboxylic acid source for the tricarboxylic acid cycle. This is Phosphoenolpyruvate carboxylase from Leuconostoc mesenteroides subsp. mesenteroides (strain ATCC 8293 / DSM 20343 / BCRC 11652 / CCM 1803 / JCM 6124 / NCDO 523 / NBRC 100496 / NCIMB 8023 / NCTC 12954 / NRRL B-1118 / 37Y).